The chain runs to 237 residues: Ribonuclease PH (237 aa).

Residues Arg86 and 124-126 (GTR) contribute to the phosphate site.

This sequence belongs to the RNase PH family. In terms of assembly, homohexameric ring arranged as a trimer of dimers.

The catalysed reaction is tRNA(n+1) + phosphate = tRNA(n) + a ribonucleoside 5'-diphosphate. Functionally, phosphorolytic 3'-5' exoribonuclease that plays an important role in tRNA 3'-end maturation. Removes nucleotide residues following the 3'-CCA terminus of tRNAs; can also add nucleotides to the ends of RNA molecules by using nucleoside diphosphates as substrates, but this may not be physiologically important. Probably plays a role in initiation of 16S rRNA degradation (leading to ribosome degradation) during starvation. The sequence is that of Ribonuclease PH from Bradyrhizobium sp. (strain ORS 278).